We begin with the raw amino-acid sequence, 201 residues long: MALHDENVVWHSHPVTPQQREQHHGHRGVVLWFTGLSGSGKSTVAGALEEALHKLGVSTYLLDGDNVRHGLCSDLGFSDADRKENIRRVGEVANLMVEAGLVVLTAFISPHRAERQMVRERVGEGRFIEVFVDTPLAICEARDPKGLYKKARAGELRNFTGIDSVYEAPESAEIHLNGEQLVTNLVQQLLDLLRQNDIIRS.

Residues 1–23 form a disordered region; the sequence is MALHDENVVWHSHPVTPQQREQH. 35–42 contributes to the ATP binding site; that stretch reads GLSGSGKS. Catalysis depends on S109, which acts as the Phosphoserine intermediate.

This sequence belongs to the APS kinase family.

The enzyme catalyses adenosine 5'-phosphosulfate + ATP = 3'-phosphoadenylyl sulfate + ADP + H(+). Its pathway is sulfur metabolism; hydrogen sulfide biosynthesis; sulfite from sulfate: step 2/3. Its function is as follows. Catalyzes the synthesis of activated sulfate. In Escherichia coli O127:H6 (strain E2348/69 / EPEC), this protein is Adenylyl-sulfate kinase.